The chain runs to 497 residues: Vacuolar-processing enzyme beta-isozyme 1 (497 aa).

Residues 1 to 23 (MAARCWVWGFVVALLAVAAAADG) form the signal peptide. An N-linked (GlcNAc...) asparagine glycan is attached at N153. H180 is an active-site residue. The Nucleophile role is filled by C222. A disulfide bridge links C255 with C269. N340 carries an N-linked (GlcNAc...) asparagine glycan. Intrachain disulfides connect C432–C462 and C444–C479.

This sequence belongs to the peptidase C13 family. Auto-catalytic activation. In terms of tissue distribution, expressed in developing seeds.

It localises to the protein storage vacuole. It carries out the reaction Hydrolysis of proteins and small molecule substrates at -Asn-|-Xaa- bonds.. Its function is as follows. Asparagine-specific endopeptidase that may be involved in processing of proteins targeted to vacuoles. Cysteine protease required for post-translational proteolysis of seed storage proteins in the protein storage vacuole (PSV) of developing seeds, by processing of proglutelin precursor to mature glutelin subunits, thus contributing to the formation of protein crystalline structures in PSV. This chain is Vacuolar-processing enzyme beta-isozyme 1, found in Oryza sativa subsp. japonica (Rice).